The chain runs to 501 residues: MSHRIAPSKERSSSFISILDDETRDTLKANAVMDGEVDVKKTKGKSSRYIPPWTTPYIIGIGGASGSGKTSVAAKIVSSINVPWTVLISLDNFYNPLGPEDRARAFKNEYDFDEPNAINLDLAYKCILNLKEGKRTNIPVYSFVHHNRVPDKNIVIYGASVVVIEGIYALYDRRLLDLMDLKIYVDADLDVCLARRLSRDIVSRGRDLDGCIQQWEKFVKPNAVKFVKPTMKNADAIIPSMSDNATAVNLIINHIKSKLELKSNEHLRELIKLGSSPSQDVLNRNIIHELPPTNQVLSLHTMLLNKNLNCADFVFYFDRLATILLSWALDDIPVAHTNIITPGEHTMENVIACQFDQVTAVNIIRSGDCFMKSLRKTIPNITIGKLLIQSDSQTGEPQLHCEFLPPNIEKFGKVFLMEGQIISGAAMIMAIQVLLDHGIDLEKISVVVYLATEVGIRRILNAFDNKVNIFAGMIISREKLQNHQYKWALTRFFDSKYFGCD.

At serine 17 the chain carries Phosphoserine. 63–70 (GASGSGKT) contributes to the ATP binding site. Serine 276 bears the Phosphoserine mark.

Belongs to the uridine kinase family.

Its subcellular location is the cytoplasm. It localises to the nucleus. It carries out the reaction uridine + ATP = UMP + ADP + H(+). The catalysed reaction is cytidine + ATP = CMP + ADP + H(+). The protein operates within pyrimidine metabolism; CTP biosynthesis via salvage pathway; CTP from cytidine: step 1/3. It functions in the pathway pyrimidine metabolism; UMP biosynthesis via salvage pathway; UMP from uridine: step 1/1. In terms of biological role, catalyzes the conversion of uridine into UMP and cytidine into CMP in the pyrimidine salvage pathway. In Saccharomyces cerevisiae (strain ATCC 204508 / S288c) (Baker's yeast), this protein is Uridine kinase (URK1).